The sequence spans 512 residues: Glycerol kinase (512 aa).

Thr-14 is a binding site for ADP. ATP-binding residues include Thr-14, Thr-15, and Ser-16. Residue Thr-14 participates in sn-glycerol 3-phosphate binding. Position 18 (Arg-18) interacts with ADP. Sn-glycerol 3-phosphate-binding residues include Arg-83, Glu-84, Tyr-135, and Asp-244. Glycerol contacts are provided by Arg-83, Glu-84, Tyr-135, Asp-244, and Gln-245. ADP is bound by residues Thr-266, Gly-309, Gly-410, and Asn-414. Positions 266, 309, and 410 each coordinate ATP.

The protein belongs to the FGGY kinase family.

The catalysed reaction is glycerol + ATP = sn-glycerol 3-phosphate + ADP + H(+). It functions in the pathway polyol metabolism; glycerol degradation via glycerol kinase pathway; sn-glycerol 3-phosphate from glycerol: step 1/1. Its activity is regulated as follows. Inhibited by fructose 1,6-bisphosphate (FBP). Its function is as follows. Key enzyme in the regulation of glycerol uptake and metabolism. Catalyzes the phosphorylation of glycerol to yield sn-glycerol 3-phosphate. This Gluconobacter oxydans (strain 621H) (Gluconobacter suboxydans) protein is Glycerol kinase.